A 58-amino-acid chain; its full sequence is UPF0337 protein CE1672 (58 aa).

The span at 1–39 (MGLGDKIRNTAEKASGKVKEATGKATDNEKLEAEGKTDQ) shows a compositional bias: basic and acidic residues. The segment at 1–58 (MGLGDKIRNTAEKASGKVKEATGKATDNEKLEAEGKTDQFKGNAKNTVENAKDTLRGN) is disordered.

The protein belongs to the UPF0337 (CsbD) family.

This chain is UPF0337 protein CE1672, found in Corynebacterium efficiens (strain DSM 44549 / YS-314 / AJ 12310 / JCM 11189 / NBRC 100395).